Consider the following 459-residue polypeptide: Bifunctional protein GlmU (459 aa).

Residues 1 to 229 (MLTQEIIIVI…YEEILGINNK (229 aa)) are pyrophosphorylase. Residues 11-14 (LAAG), Lys-25, Gln-76, 81-82 (GT), 103-105 (YGD), Gly-140, Glu-154, and Asn-227 each bind UDP-N-acetyl-alpha-D-glucosamine. Asp-105 contacts Mg(2+). Position 227 (Asn-227) interacts with Mg(2+). The tract at residues 230-250 (LQLSNLEKIFQKKQINKLLIN) is linker. Residues 251–459 (GVTIKDPSHF…MRSKKIIKKN (209 aa)) form an N-acetyltransferase region. Residues Arg-333 and Lys-351 each coordinate UDP-N-acetyl-alpha-D-glucosamine. His-363 serves as the catalytic Proton acceptor. 2 residues coordinate UDP-N-acetyl-alpha-D-glucosamine: Tyr-366 and Asn-377. Residues Ala-380, 386-387 (NY), Ser-405, and Ala-423 each bind acetyl-CoA.

It in the N-terminal section; belongs to the N-acetylglucosamine-1-phosphate uridyltransferase family. This sequence in the C-terminal section; belongs to the transferase hexapeptide repeat family. Homotrimer. The cofactor is Mg(2+).

The protein localises to the cytoplasm. The catalysed reaction is alpha-D-glucosamine 1-phosphate + acetyl-CoA = N-acetyl-alpha-D-glucosamine 1-phosphate + CoA + H(+). It carries out the reaction N-acetyl-alpha-D-glucosamine 1-phosphate + UTP + H(+) = UDP-N-acetyl-alpha-D-glucosamine + diphosphate. Its pathway is nucleotide-sugar biosynthesis; UDP-N-acetyl-alpha-D-glucosamine biosynthesis; N-acetyl-alpha-D-glucosamine 1-phosphate from alpha-D-glucosamine 6-phosphate (route II): step 2/2. It functions in the pathway nucleotide-sugar biosynthesis; UDP-N-acetyl-alpha-D-glucosamine biosynthesis; UDP-N-acetyl-alpha-D-glucosamine from N-acetyl-alpha-D-glucosamine 1-phosphate: step 1/1. It participates in bacterial outer membrane biogenesis; LPS lipid A biosynthesis. Its function is as follows. Catalyzes the last two sequential reactions in the de novo biosynthetic pathway for UDP-N-acetylglucosamine (UDP-GlcNAc). The C-terminal domain catalyzes the transfer of acetyl group from acetyl coenzyme A to glucosamine-1-phosphate (GlcN-1-P) to produce N-acetylglucosamine-1-phosphate (GlcNAc-1-P), which is converted into UDP-GlcNAc by the transfer of uridine 5-monophosphate (from uridine 5-triphosphate), a reaction catalyzed by the N-terminal domain. The polypeptide is Bifunctional protein GlmU (Buchnera aphidicola subsp. Acyrthosiphon pisum (strain 5A)).